The primary structure comprises 297 residues: Small ribosomal subunit biogenesis GTPase RsgA (297 aa).

Positions 65–223 (INEIGRPAVA…IADTPGFSAI (159 aa)) constitute a CP-type G domain. Residues 114–117 (SKSD) and 166–174 (GQSGAGKST) contribute to the GTP site. The Zn(2+) site is built by Cys-247, Cys-252, His-254, and Cys-260.

This sequence belongs to the TRAFAC class YlqF/YawG GTPase family. RsgA subfamily. Monomer. Associates with 30S ribosomal subunit, binds 16S rRNA. Requires Zn(2+) as cofactor.

The protein localises to the cytoplasm. Its function is as follows. One of several proteins that assist in the late maturation steps of the functional core of the 30S ribosomal subunit. Helps release RbfA from mature subunits. May play a role in the assembly of ribosomal proteins into the subunit. Circularly permuted GTPase that catalyzes slow GTP hydrolysis, GTPase activity is stimulated by the 30S ribosomal subunit. This Lactobacillus johnsonii (strain CNCM I-12250 / La1 / NCC 533) protein is Small ribosomal subunit biogenesis GTPase RsgA.